The following is a 1021-amino-acid chain: Contactin-1 (1021 aa).

Positions 1-20 are cleaved as a signal peptide; that stretch reads MKTPLLVSHLLLISLTSCLG. Ig-like C2-type domains lie at 41–131, 137–223, 241–326, 331–407, 413–500, and 504–603; these read PIFE…ATLS, PFPP…KSVF, PADI…ARIY, PEWV…AELK, PTFE…GTLV, and PTRI…LVVR. Cystine bridges form between C65–C114 and C158–C211. N-linked (GlcNAc...) asparagine glycans are attached at residues N208 and N258. The cysteines at positions 263 and 310 are disulfide-linked. An N-linked (GlcNAc...) asparagine glycan is attached at N338. Intrachain disulfides connect C352-C391 and C436-C484. Residues N457, N473, N494, and N521 are each glycosylated (N-linked (GlcNAc...) asparagine). The cysteines at positions 526 and 585 are disulfide-linked. A glycan (N-linked (GlcNAc...) asparagine) is linked at N593. 4 consecutive Fibronectin type-III domains span residues 608–706, 711–808, 813–908, and 909–1002; these read PPGG…TDGA, APSD…SAQD, APTE…APPS, and QPPR…TLSS. The segment at 695-719 is disordered; it reads SIPSNRIKTDGAAPNVAPSDVGGGG. A glycan (N-linked (GlcNAc...) asparagine) is linked at N935. S1001 carries the GPI-anchor amidated serine lipid modification. A propeptide spans 1002–1021 (removed in mature form); sequence SGLLSLLLPSLGFLVFYSEF.

The protein belongs to the immunoglobulin superfamily. Contactin family. As to quaternary structure, monomer. Interacts with NOTCH1. Interacts with CNTNAP1 in cis form and TNR. Binds to the carbonic-anhydrase like domain of PTPRZ1. Detected in a complex with NRCAM and PTPRB. Interacts with TASOR. As to expression, expressed by neurons, oligodendrocytes and their progenitors (at protein level). Myelination regulates the expression being down-regulated when neurons are in contact with Schwann cells.

Its subcellular location is the cell membrane. Its function is as follows. Contactins mediate cell surface interactions during nervous system development. Involved in the formation of paranodal axo-glial junctions in myelinated peripheral nerves and in the signaling between axons and myelinating glial cells via its association with CNTNAP1. Participates in oligodendrocytes generation by acting as a ligand of NOTCH1. Its association with NOTCH1 promotes NOTCH1 activation through the released notch intracellular domain (NICD) and subsequent translocation to the nucleus. Interaction with TNR induces a repulsion of neurons and an inhibition of neurite outgrowth. The sequence is that of Contactin-1 (Cntn1) from Rattus norvegicus (Rat).